Here is a 373-residue protein sequence, read N- to C-terminus: Glycerol-3-phosphate dehydrogenase [NAD(+)] 2 (373 aa).

Residue Ser15 is modified to Phosphoserine. Residues 31-36 (GSGNWG), Phe123, Lys146, and Ala179 contribute to the NAD(+) site. Residue Lys146 participates in substrate binding. Lys236 serves as the catalytic Proton acceptor. Residues Arg300 and Gln329 each contribute to the NAD(+) site. 300 to 301 (RN) lines the substrate pocket.

This sequence belongs to the NAD-dependent glycerol-3-phosphate dehydrogenase family.

Its subcellular location is the cytoplasm. The catalysed reaction is sn-glycerol 3-phosphate + NAD(+) = dihydroxyacetone phosphate + NADH + H(+). In Schizosaccharomyces pombe (strain 972 / ATCC 24843) (Fission yeast), this protein is Glycerol-3-phosphate dehydrogenase [NAD(+)] 2 (gpd2).